The primary structure comprises 1072 residues: Carbamoyl phosphate synthase large chain (1072 aa).

The carboxyphosphate synthetic domain stretch occupies residues 1–401 (MPKRLDINTI…SLLKAVRSLE (401 aa)). Residues Arg129, Arg169, Gly175, Gly176, Lys208, Ile210, Glu215, Gly241, Val242, His243, Gln284, and Glu298 each coordinate ATP. An ATP-grasp 1 domain is found at 133–327 (RTLMQELNEP…IAKLAAKIAV (195 aa)). The Mg(2+) site is built by Gln284, Glu298, and Asn300. Gln284, Glu298, and Asn300 together coordinate Mn(2+). Positions 402-546 (LGIYHLELDH…YSTYADENES (145 aa)) are oligomerization domain. The segment at 547–929 (IVTDRKSVVV…ALYKGLVASG (383 aa)) is carbamoyl phosphate synthetic domain. Residues 671–861 (EAALTKLGIP…MANVATKVIL (191 aa)) enclose the ATP-grasp 2 domain. The ATP site is built by Arg707, Arg746, Glu752, Gly777, Val778, His779, Ser780, Gln820, and Glu832. Mg(2+) is bound by residues Gln820, Glu832, and Asn834. Positions 820, 832, and 834 each coordinate Mn(2+). One can recognise an MGS-like domain in the interval 930–1072 (INIPTHGSVI…QTKRHEVVHA (143 aa)). An allosteric domain region spans residues 930–1072 (INIPTHGSVI…QTKRHEVVHA (143 aa)).

Belongs to the CarB family. In terms of assembly, composed of two chains; the small (or glutamine) chain promotes the hydrolysis of glutamine to ammonia, which is used by the large (or ammonia) chain to synthesize carbamoyl phosphate. Tetramer of heterodimers (alpha,beta)4. It depends on Mg(2+) as a cofactor. Requires Mn(2+) as cofactor.

It carries out the reaction hydrogencarbonate + L-glutamine + 2 ATP + H2O = carbamoyl phosphate + L-glutamate + 2 ADP + phosphate + 2 H(+). The enzyme catalyses hydrogencarbonate + NH4(+) + 2 ATP = carbamoyl phosphate + 2 ADP + phosphate + 2 H(+). Its pathway is amino-acid biosynthesis; L-arginine biosynthesis; carbamoyl phosphate from bicarbonate: step 1/1. The protein operates within pyrimidine metabolism; UMP biosynthesis via de novo pathway; (S)-dihydroorotate from bicarbonate: step 1/3. Its function is as follows. Large subunit of the glutamine-dependent carbamoyl phosphate synthetase (CPSase). CPSase catalyzes the formation of carbamoyl phosphate from the ammonia moiety of glutamine, carbonate, and phosphate donated by ATP, constituting the first step of 2 biosynthetic pathways, one leading to arginine and/or urea and the other to pyrimidine nucleotides. The large subunit (synthetase) binds the substrates ammonia (free or transferred from glutamine from the small subunit), hydrogencarbonate and ATP and carries out an ATP-coupled ligase reaction, activating hydrogencarbonate by forming carboxy phosphate which reacts with ammonia to form carbamoyl phosphate. This chain is Carbamoyl phosphate synthase large chain, found in Bacillus thuringiensis (strain Al Hakam).